Consider the following 772-residue polypeptide: Magnetosome formation protease MamE (772 aa).

Over 1-21 (MTMFNGDVEDGGRSNVSCGKD) the chain is Cytoplasmic. Residues 22 to 42 (LKRYLMLMGVVALVVLFGAFI) traverse the membrane as a helical segment. Over 43 to 772 (YRQSSGGLRL…RNGQEFWIVL (730 aa)) the chain is Lumenal. Active-site charge relay system residues include histidine 187, aspartate 220, and serine 296. Positions 374 to 397 (IAAGTPSPHVDGRQNMDCSNCHDI) match the MCR (magnetochrome) 1 motif. Positions 391, 394, 395, 437, 440, 441, 488, 491, and 492 each coordinate heme. Short sequence motifs (MCR) lie at residues 420–443 (IPAN…CHQF) and 470–494 (AIRA…CHQI). The Cytochrome c domain maps to 445-558 (GGAAAGPIAF…ALTPLTQRLG (114 aa)). PDZ domains follow at residues 522-626 (AINI…LRAG) and 696-765 (GATP…HRNG).

This sequence in the N-terminal section; belongs to the peptidase S1C family. As to quaternary structure, might interact with MamB via PDZ1. Requires heme as cofactor. In terms of processing, the protein isolated from magnetosome membranes has a molecular weight of about 36.3 kDa, probably due to C-terminal cleavage. Subject to autocatalytic cleavage; cleavage also requires MamO; these may be the same event.

It localises to the magnetosome membrane. Functionally, acts at 2 distinct steps of magnetosome formation; required for correct localization of proteins to the magnetosome while the protease activity is required for maturation of small magnetite crystals into larger, functional ones. Probably cleaves at least itself, MamO and MamP; cleavage requires the putative transprot domain of MamO. Involved in localization of some proteins (at least MamA, MamC, MamF, MamI and MamJ) to the magnetosome. One of 7 genes (mamLQBIEMO) able to induce magnetosome membrane biogenesis; coexpression of mamLQRBIEMO in a deletion of the 17 gene mamAB operon restores magnetosome vesicle formation but not magnetite biosynthesis. This chain is Magnetosome formation protease MamE, found in Magnetospirillum gryphiswaldense (strain DSM 6361 / JCM 21280 / NBRC 15271 / MSR-1).